Consider the following 406-residue polypeptide: Succinylornithine transaminase (406 aa).

An N6-(pyridoxal phosphate)lysine modification is found at Lys252.

The protein belongs to the class-III pyridoxal-phosphate-dependent aminotransferase family. AstC subfamily. It depends on pyridoxal 5'-phosphate as a cofactor.

The catalysed reaction is N(2)-succinyl-L-ornithine + 2-oxoglutarate = N-succinyl-L-glutamate 5-semialdehyde + L-glutamate. Its pathway is amino-acid degradation; L-arginine degradation via AST pathway; L-glutamate and succinate from L-arginine: step 3/5. In terms of biological role, catalyzes the transamination of N(2)-succinylornithine and alpha-ketoglutarate into N(2)-succinylglutamate semialdehyde and glutamate. Can also act as an acetylornithine aminotransferase. In Shigella boydii serotype 18 (strain CDC 3083-94 / BS512), this protein is Succinylornithine transaminase.